The following is a 170-amino-acid chain: MFEVSAIVFAVSQAAEEGKSSNFLLPNGTFFFVLAIFLVVLGVIGTFVVPPILKVLQERDAMVAKTDADSKMSAAQFAAAQADYEAAMKEARVQSSFLRDNARVDGRKSIEEARVRAEQHVVSTLQIAGEQIKRERDAVELDLRAKAGAMSLILASRILGVDITASVVTR.

The helical transmembrane segment at 30–50 (FFFVLAIFLVVLGVIGTFVVP) threads the bilayer.

The protein belongs to the ATPase B chain family. F-type ATPases have 2 components, F(1) - the catalytic core - and F(0) - the membrane proton channel. F(1) has five subunits: alpha(3), beta(3), gamma(1), delta(1), epsilon(1). F(0) has three main subunits: a(1), b(2) and c(10-14). The alpha and beta chains form an alternating ring which encloses part of the gamma chain. F(1) is attached to F(0) by a central stalk formed by the gamma and epsilon chains, while a peripheral stalk is formed by the delta and b chains.

It localises to the cell membrane. F(1)F(0) ATP synthase produces ATP from ADP in the presence of a proton or sodium gradient. F-type ATPases consist of two structural domains, F(1) containing the extramembraneous catalytic core and F(0) containing the membrane proton channel, linked together by a central stalk and a peripheral stalk. During catalysis, ATP synthesis in the catalytic domain of F(1) is coupled via a rotary mechanism of the central stalk subunits to proton translocation. Functionally, component of the F(0) channel, it forms part of the peripheral stalk, linking F(1) to F(0). The sequence is that of ATP synthase subunit b from Mycobacterium leprae (strain TN).